We begin with the raw amino-acid sequence, 612 residues long: Actin-binding LIM protein 2 (612 aa).

LIM zinc-binding domains follow at residues 22 to 81, 81 to 141, 151 to 210, and 210 to 270; these read ILCN…LYGT, TRCF…TLVG, RSCG…KFGI, and IRCD…ARTE. The Zn(2+) site is built by Cys-83, Cys-86, His-103, Cys-106, Cys-109, Cys-112, Cys-131, and Cys-134. Positions 212, 215, 232, 235, 238, 241, 260, and 263 each coordinate Zn(2+). The segment covering 269–278 has biased composition (basic and acidic residues); it reads TEDKSKETRT. Disordered stretches follow at residues 269 to 295 and 341 to 433; these read TEDK…SGSP and AVGD…DNIY. 2 stretches are compositionally biased toward low complexity: residues 279–295 and 364–373; these read SSES…SGSP and SSPSSAGSVS. 4 positions are modified to phosphoserine: Ser-282, Ser-294, Ser-365, and Ser-368. Residues 394 to 416 are compositionally biased toward polar residues; that stretch reads SGRSTPSLSVHSDSRPPSSTYQQ. At Ser-453 the chain carries Phosphoserine. Positions 471–520 are disordered; sequence ADTRTNSPDLDSQSLSLSSGADQEPLQRMPGDSLYSRFPYSKPDTLPGPR. Thr-473 bears the Phosphothreonine mark. Phosphoserine is present on residues Ser-477 and Ser-579. Over residues 477-489 the composition is skewed to low complexity; the sequence is SPDLDSQSLSLSS. The 69-residue stretch at 544-612 folds into the HP domain; the sequence is TREYKIYPYD…NDLKKKALLF (69 aa).

Interacts with F-actin and ABRA.

It is found in the cytoplasm. Its function is as follows. May act as scaffold protein. May stimulate ABRA activity and ABRA-dependent SRF transcriptional activity. This Rattus norvegicus (Rat) protein is Actin-binding LIM protein 2 (Ablim2).